The following is a 1352-amino-acid chain: Astrotactin-2 (1352 aa).

Positions 1–31 are disordered; sequence MAAAGARRSPGRGLGLRGRPRLGFHPGPPPP. Residues 1–51 form the signal peptide; sequence MAAAGARRSPGRGLGLRGRPRLGFHPGPPPPPPPPLLLLFLLLLPPPPLLA. At 52-218 the chain is on the lumenal side; that stretch reads GATAAAASRE…IVEEQMHILH (167 aa). Asn-180 is a glycosylation site (N-linked (GlcNAc...) asparagine). The helical transmembrane segment at 219–239 threads the bilayer; it reads ISVMGGLIALLLLLLVFTVAL. Residues 240-447 are Cytoplasmic-facing; that stretch reads YAQRRWQKRR…KGLLKSPVNK (208 aa). Disordered regions lie at residues 308-327 and 375-421; these read EEEE…DEFG and TPVE…ADDE. Over residues 383–392 the composition is skewed to polar residues; the sequence is QPASRSSTSA. The helical transmembrane segment at 448–468 threads the bilayer; that stretch reads TALTLIAVSSCILAMVCGNQM. Residues 469–1352 lie on the Lumenal side of the membrane; sequence SCPLTVKVTL…RNTYGETKGR (884 aa). 3 EGF-like domains span residues 523 to 563, 664 to 708, and 712 to 764; these read VRDL…HLCV, PVRD…SGCY, and KGID…KSCL. 9 disulfides stabilise this stretch: Cys-527/Cys-539, Cys-535/Cys-546, Cys-548/Cys-562, Cys-668/Cys-681, Cys-675/Cys-692, Cys-694/Cys-707, Cys-716/Cys-728, Cys-724/Cys-748, and Cys-750/Cys-763. Asn-796 carries N-linked (GlcNAc...) asparagine glycosylation. 3 disulfide bridges follow: Cys-838–Cys-1000, Cys-929–Cys-990, and Cys-996–Cys-1003. Asn-1033 carries N-linked (GlcNAc...) asparagine glycosylation. Cystine bridges form between Cys-1049–Cys-1060, Cys-1062–Cys-1075, Cys-1149–Cys-1171, Cys-1203–Cys-1290, and Cys-1311–Cys-1334. Residues 1079 to 1201 form the Fibronectin type-III domain; sequence PQPVLRLSPT…SELSTVTLRT (123 aa).

It belongs to the astrotactin family. As to quaternary structure, interacts with ASTN1; the interaction is not calcium-dependent. In terms of tissue distribution, detected in cerebellum granule neurons; not detected in astroglia (at protein level). Detected primarily in cerebellum, and at lower levels in brain cortex, olfactory bulb, hindbrain and hippocampus dentate gyrus. Between 6 and 10 days after birth, when granule cell migration occurs in the cerebellum, detected in granule cell precursors in the external germinal layer, the molecular layer, the internal granule layer and in Purkinje neurons. Detected in postmitotic neurons in adult cerebellum.

The protein resides in the membrane. It localises to the perikaryon. The protein localises to the cytoplasm. Its subcellular location is the cell cortex. It is found in the early endosome. The protein resides in the late endosome. It localises to the cytoplasmic vesicle. The protein localises to the clathrin-coated vesicle. Its function is as follows. Mediates recycling of the neuronal cell adhesion molecule ASTN1 to the anterior pole of the cell membrane in migrating neurons. Promotes ASTN1 internalization and intracellular transport of endocytosed ASTN1. Selectively binds inositol-4,5-bisphosphate, inositol-3,4,5-trisphosphate and inositol-1,3,4,5-tetrakisphosphate, suggesting it is recruited to membranes that contain lipids with a phosphoinositide headgroup. This Mus musculus (Mouse) protein is Astrotactin-2 (Astn2).